Reading from the N-terminus, the 239-residue chain is Type III effector protein HopBA1 (239 aa).

Residues 1-20 (MLNRISSSSPTSYVSSGSSS) show a composition bias toward low complexity. Residues 1–31 (MLNRISSSSPTSYVSSGSSSAGINPSINVRP) form a disordered region.

The protein resides in the secreted. It localises to the host cell. Functionally, virulence factor recognized by the A.thaliana disease resistance protein RBA1, which triggers plant cell death. HopBA1 enhances RBA1 self-association, which is necessary for ectopic autoactivation of host cell death. The polypeptide is Type III effector protein HopBA1 (Pseudomonas syringae pv. aptata).